The sequence spans 354 residues: MGFCIPLRSKMLKRVSRKSSSILARRPTPKKMNIVTDSENRLKKNSYIENTNQGNILMDSIFVSTMPVETLFGSYITDDNDDYELKDLLNVTYNIKPVIVPDIKLDSVLDRDGNFRPADCFLVKLKHSDGFTKGALYLGHSAGFTATICLKNEGVSGLYIPGTSVVRSNICQGDTIVSRSSRGVQFLPQIGGEAIFLIVSLCPTKKLVETGFVIPEISSNDNAKIAARILSEKRKDIIAHINTLIQYRQQLELAYYNSCMLTEFLHYCNSYADTIKESLLKETIQKDINIIHTNITTLLNETAKVIKLVKSLVDKEDTDIVNNFITKEIKNCGGVKNRDKIVNSLSLSNLDFRL.

This sequence belongs to the orthopoxvirus OPG055 family.

In terms of biological role, stimulates increases in peripheral microtubule dynamics and may increase the motility of the infected cells, contributing to cell-to-cell spread of the virus. Seems to inhibit the signaling via the GTPase RHOA and DIAPH1/mDia. The chain is Protein OPG055 (OPG055) from Cynomys gunnisoni (Gunnison's prairie dog).